A 407-amino-acid polypeptide reads, in one-letter code: Na(+)-translocating NADH-quinone reductase subunit F (407 aa).

Residues 3–23 form a helical membrane-spanning segment; sequence ITLGIAMFTVIVLALAVLILF. A 2Fe-2S ferredoxin-type domain is found at 32–126; sequence GDITIEINDD…SMKIELPEEV (95 aa). [2Fe-2S] cluster contacts are provided by cysteine 69, cysteine 75, cysteine 78, and cysteine 110. In terms of domain architecture, FAD-binding FR-type spans 129 to 269; that stretch reads VKKWECTVIS…SGPFGEFFAK (141 aa).

Belongs to the NqrF family. In terms of assembly, composed of six subunits; NqrA, NqrB, NqrC, NqrD, NqrE and NqrF. Requires [2Fe-2S] cluster as cofactor. FAD serves as cofactor.

The protein localises to the cell inner membrane. It catalyses the reaction a ubiquinone + n Na(+)(in) + NADH + H(+) = a ubiquinol + n Na(+)(out) + NAD(+). Its function is as follows. NQR complex catalyzes the reduction of ubiquinone-1 to ubiquinol by two successive reactions, coupled with the transport of Na(+) ions from the cytoplasm to the periplasm. The first step is catalyzed by NqrF, which accepts electrons from NADH and reduces ubiquinone-1 to ubisemiquinone by a one-electron transfer pathway. The chain is Na(+)-translocating NADH-quinone reductase subunit F from Histophilus somni (strain 129Pt) (Haemophilus somnus).